The primary structure comprises 349 residues: GTPase Obg (349 aa).

An Obg domain is found at 1 to 159; it reads MKFLDQAKVY…LWIWLRLKLI (159 aa). One can recognise an OBG-type G domain in the interval 160–327; that stretch reads ADAGLIGLPN…VLRALMRVVQ (168 aa). GTP-binding positions include 166–173, 191–195, 212–215, 279–282, and 308–310; these read GLPNAGKS, FTTLH, DIPG, SQID, and SSA. Residues S173 and T193 each contribute to the Mg(2+) site.

This sequence belongs to the TRAFAC class OBG-HflX-like GTPase superfamily. OBG GTPase family. Monomer. It depends on Mg(2+) as a cofactor.

It is found in the cytoplasm. An essential GTPase which binds GTP, GDP and possibly (p)ppGpp with moderate affinity, with high nucleotide exchange rates and a fairly low GTP hydrolysis rate. Plays a role in control of the cell cycle, stress response, ribosome biogenesis and in those bacteria that undergo differentiation, in morphogenesis control. This is GTPase Obg from Chelativorans sp. (strain BNC1).